The sequence spans 338 residues: Phenylalanine--tRNA ligase alpha subunit (338 aa).

Glu-253 provides a ligand contact to Mg(2+).

This sequence belongs to the class-II aminoacyl-tRNA synthetase family. Phe-tRNA synthetase alpha subunit type 1 subfamily. Tetramer of two alpha and two beta subunits. It depends on Mg(2+) as a cofactor.

It localises to the cytoplasm. The catalysed reaction is tRNA(Phe) + L-phenylalanine + ATP = L-phenylalanyl-tRNA(Phe) + AMP + diphosphate + H(+). The polypeptide is Phenylalanine--tRNA ligase alpha subunit (Pelobacter propionicus (strain DSM 2379 / NBRC 103807 / OttBd1)).